The following is a 104-amino-acid chain: uncharacterized protein (104 aa).

The protein to A.aeolicus AQ_377.

This is an uncharacterized protein from Archaeoglobus fulgidus (strain ATCC 49558 / DSM 4304 / JCM 9628 / NBRC 100126 / VC-16).